We begin with the raw amino-acid sequence, 213 residues long: MGKKTDNPETNNASSGAEEEEEEYAVEKILDRRVRKGKVEYYLKWKGYAETENTWEPEGNLDCQDLIQQYELSRKDEANAAASSSSSSSKKERPGSSTKVKETGRTSTTASNSSGSKRKSEEPAGPAGSKSKRVESEDTGDIVPAGGTGFDRGLEAEKILGASDNNGRLTFLIQFKGVDQAEMVPSTVANVKIPQMVIRFYEERLSWYSDNED.

Disordered regions lie at residues 1-24 and 74-151; these read MGKK…EEEY and RKDE…TGFD. In terms of domain architecture, Chromo 1 spans 24–82; it reads YAVEKILDRRVRKGKVEYYLKWKGYAETENTWEPEGNLDCQDLIQQYELSRKDEANAAA. Residues 89–104 are compositionally biased toward basic and acidic residues; that stretch reads SKKERPGSSTKVKETG. Polar residues predominate over residues 105–115; the sequence is RTSTTASNSSG. Positions 154–212 constitute a Chromo 2 domain; that stretch reads LEAEKILGASDNNGRLTFLIQFKGVDQAEMVPSTVANVKIPQMVIRFYEERLSWYSDNE.

The protein localises to the nucleus. In terms of biological role, structural component of heterochromatin, involved in gene repression and the modification of position-effect-variegation. Recognizes and binds histone H3 tails methylated at 'Lys-9', leading to epigenetic repression. The polypeptide is Heterochromatin protein 1 (HP1A) (Drosophila virilis (Fruit fly)).